A 333-amino-acid polypeptide reads, in one-letter code: B3 domain-containing protein At1g32030 (333 aa).

2 stretches are compositionally biased toward polar residues: residues Val-76–Asp-99 and Pro-134–Leu-143. Residues Val-76 to Tyr-179 are disordered. Positions Gln-220–Pro-328 form a DNA-binding region, TF-B3.

It is found in the nucleus. This chain is B3 domain-containing protein At1g32030, found in Arabidopsis thaliana (Mouse-ear cress).